Here is a 314-residue protein sequence, read N- to C-terminus: DDRGK domain-containing protein 1 (314 aa).

Residues 1-28 (MVAPVWYLVAAALLVGFILFLTRSRGRA) form a helical membrane-spanning segment. Residues 1–114 (MVAPVWYLVA…VEKPAETHLS (114 aa)) are mediates interaction with CDK5RAP3. At 29–314 (ASAGQEPLHN…GRESPAQAPA (286 aa)) the chain is on the cytoplasmic side. 2 disordered regions span residues 31–75 (AGQE…SRLQ) and 100–186 (QEEE…QREH). A phosphoserine mark is found at S72 and S114. Positions 118 to 216 (GAKKLRKLEE…MTEEQSQSFL (99 aa)) are mediates interaction with TRIP4. Over residues 124–186 (KLEEKQARKA…AREEQAQREH (63 aa)) the composition is skewed to basic and acidic residues. Residues 195–209 (AFVVEEEGVGETMTE) carry the UFM1-interacting motif (UFIM) motif. Residues 216 to 314 (LTEFINYIKQ…GRESPAQAPA (99 aa)) are mediates interaction with UFL1. One can recognise a PCI domain in the interval 229–273 (VLLEDLASQVGLRTQDTINRIQDLLAEGTITGVIDDRGKFIYITP). K267 participates in a covalent cross-link: Glycyl lysine isopeptide (Lys-Gly) (interchain with G-Cter in UFM1).

Belongs to the DDRGK1 family. Component of the UFM1 ribosome E3 ligase (UREL) complex, composed of UFL1, DDRGK1 and CDK5RAP3. Interacts with (unphosphorylated) ERN1/IRE1-alpha; interaction is dependent on UFM1 and takes place in response to endoplasmic reticulum stress, regulating ERN1/IRE1-alpha stability. Interacts with NFKBIA. Interacts with SOX9. In terms of processing, ubiquitinated. Ubiquitination probably triggers proteasomal degradation and is negatively regulated by UFL1, the enzyme involved in the ufmylation of DDRGK1. Ufmylated; conjugated to ubiquitin-like protein UFM1, probably at Lys-267 by UFL1. The relevance of ufmylation is however unclear: as DDRGK1 acts as a substrate adapters for ufmylation, it is uncertain whether ufmylation is a collateral effect of ufmylation process or is required to regulate its activity. Widely expressed (at protein level). In the brain, highest levels in medulla oblongata, followed by cerebral cortex, cerebellum and frontal lobe.

The protein resides in the endoplasmic reticulum membrane. Component of the UFM1 ribosome E3 ligase (UREL) complex, a multiprotein complex that catalyzes ufmylation of endoplasmic reticulum-docked proteins. The UREL complex plays a key role in ribosome recycling by mediating mono-ufmylation of the RPL26/uL24 subunit of the 60S ribosome following ribosome dissociation: ufmylation weakens the junction between post-termination 60S subunits and SEC61 translocons, promoting release and recycling of the large ribosomal subunit from the endoplasmic reticulum membrane. Ufmylation of RPL26/uL24 and subsequent 60S ribosome recycling either take place after normal termination of translation or after ribosome stalling during cotranslational translocation at the endoplasmic reticulum. Within the UREL complex, DDRGK1 tethers the complex to the endoplasmic reticulum membrane to restrict its activity to endoplasmic reticulum-docked ribosomes and acts as an ufmylation 'reader': following RPL26/uL24 ufmylation, DDRGK1 specifically binds to ufmylated RPL26/uL24 via its UFIM motif, resulting in stable association between the 60S ribosome and the UREL complex, followed by dissociation of the 60S ribosome subunit from the endoplasmic reticulum membrane. The UREL complex is also involved in reticulophagy in response to endoplasmic reticulum stress by promoting ufmylation of proteins such as CYB5R3 and RPN1, thereby promoting lysosomal degradation of ufmylated proteins. Ufmylation-dependent reticulophagy inhibits the unfolded protein response (UPR) by regulating ERN1/IRE1-alpha stability. Acts as a regulator of immunity by promoting differentiation of B-cells into plasma cells: acts by promoting expansion of the endoplasmic reticulum and regulating the unfolded protein response (UPR). May also be required for TRIP4 ufmylation. May play a role in NF-kappa-B-mediated transcription through regulation of the phosphorylation and the degradation of NFKBIA, the inhibitor of NF-kappa-B. Plays a role in cartilage development through SOX9, inhibiting the ubiquitin-mediated proteasomal degradation of this transcriptional regulator. Required for stabilization and ufmylation of ATG9A. The chain is DDRGK domain-containing protein 1 from Homo sapiens (Human).